We begin with the raw amino-acid sequence, 257 residues long: Anamorsin homolog (257 aa).

The tract at residues 1-132 (MSVLALDVAR…ARGTAFALKS (132 aa)) is N-terminal SAM-like domain. Positions 133–171 (RAVRVNATAADAADAWGASAAADDDELIDESALLTELDV) are linker. [2Fe-2S] cluster is bound by residues cysteine 181, cysteine 190, cysteine 193, and cysteine 195. The tract at residues 181 to 195 (CDVGAGKKACKNCTC) is fe-S binding site A. [4Fe-4S] cluster-binding residues include cysteine 219, cysteine 222, cysteine 230, and cysteine 233. 2 short sequence motifs (cx2C motif) span residues 219 to 222 (CGNC) and 230 to 233 (CAGC). The segment at 219 to 233 (CGNCALGDAFRCAGC) is fe-S binding site B.

It belongs to the anamorsin family. As to quaternary structure, monomer. [2Fe-2S] cluster serves as cofactor. Requires [4Fe-4S] cluster as cofactor.

The protein resides in the cytoplasm. Its subcellular location is the mitochondrion intermembrane space. Its function is as follows. Component of the cytosolic iron-sulfur (Fe-S) protein assembly (CIA) machinery. Required for the maturation of extramitochondrial Fe-S proteins. Part of an electron transfer chain functioning in an early step of cytosolic Fe-S biogenesis, facilitating the de novo assembly of a [4Fe-4S] cluster on the cytosolic Fe-S scaffold complex. Electrons are transferred from NADPH via a FAD- and FMN-containing diflavin oxidoreductase. Together with the diflavin oxidoreductase, also required for the assembly of the diferric tyrosyl radical cofactor of ribonucleotide reductase (RNR), probably by providing electrons for reduction during radical cofactor maturation in the catalytic small subunit. The sequence is that of Anamorsin homolog from Ostreococcus lucimarinus (strain CCE9901).